Consider the following 876-residue polypeptide: Alanine--tRNA ligase (876 aa).

N6-acetyllysine is present on lysine 74. Zn(2+)-binding residues include histidine 564, histidine 568, cysteine 666, and histidine 670.

This sequence belongs to the class-II aminoacyl-tRNA synthetase family. Homotetramer. It depends on Zn(2+) as a cofactor.

It is found in the cytoplasm. The catalysed reaction is tRNA(Ala) + L-alanine + ATP = L-alanyl-tRNA(Ala) + AMP + diphosphate. Catalyzes the attachment of alanine to tRNA(Ala) in a two-step reaction: alanine is first activated by ATP to form Ala-AMP and then transferred to the acceptor end of tRNA(Ala). Also edits incorrectly charged Ser-tRNA(Ala) and Gly-tRNA(Ala) via its editing domain. The sequence is that of Alanine--tRNA ligase from Shigella boydii serotype 4 (strain Sb227).